A 124-amino-acid chain; its full sequence is Late histone H2B.2.2 (124 aa).

Positions 1–32 (MPAKQTSGKGAKKAGKAKGRPSGASKTRRRKR) are disordered. Positions 10 to 19 (GAKKAGKAKG) are enriched in basic residues. Ser-111 is a glycosylation site (O-linked (GlcNAc) serine). Residue Lys-119 forms a Glycyl lysine isopeptide (Lys-Gly) (interchain with G-Cter in ubiquitin) linkage.

The protein belongs to the histone H2B family. As to quaternary structure, the nucleosome is a histone octamer containing two molecules each of H2A, H2B, H3 and H4 assembled in one H3-H4 heterotetramer and two H2A-H2B heterodimers. The octamer wraps approximately 147 bp of DNA. Post-translationally, monoubiquitination of Lys-119 gives a specific tag for epigenetic transcriptional activation and is also prerequisite for histone H3 'Lys-4' and 'Lys-79' methylation. GlcNAcylation at Ser-111 promotes monoubiquitination of Lys-119. It fluctuates in response to extracellular glucose, and associates with transcribed genes.

The protein resides in the nucleus. The protein localises to the chromosome. In terms of biological role, core component of nucleosome. Nucleosomes wrap and compact DNA into chromatin, limiting DNA accessibility to the cellular machineries which require DNA as a template. Histones thereby play a central role in transcription regulation, DNA repair, DNA replication and chromosomal stability. DNA accessibility is regulated via a complex set of post-translational modifications of histones, also called histone code, and nucleosome remodeling. This is Late histone H2B.2.2 from Psammechinus miliaris (Green sea urchin).